We begin with the raw amino-acid sequence, 318 residues long: Curved DNA-binding protein (318 aa).

One can recognise a J domain in the interval 5-69; that stretch reads DYYKILGVEP…QKRAEFDEIR (65 aa). The interval 111 to 130 is disordered; the sequence is GGGNPFGGARQQQRSAGRRG.

It localises to the cytoplasm. The protein localises to the nucleoid. Functionally, DNA-binding protein that preferentially recognizes a curved DNA sequence. It is probably a functional analog of DnaJ; displays overlapping activities with DnaJ, but functions under different conditions, probably acting as a molecular chaperone in an adaptive response to environmental stresses other than heat shock. Lacks autonomous chaperone activity; binds native substrates and targets them for recognition by DnaK. Its activity is inhibited by the binding of CbpM. The sequence is that of Curved DNA-binding protein from Pseudomonas putida (strain GB-1).